Reading from the N-terminus, the 349-residue chain is N-acetyltaurine hydrolase (349 aa).

Residues histidine 26, histidine 28, glutamate 169, histidine 201, histidine 230, and aspartate 298 each coordinate a divalent metal cation.

The protein belongs to the metallo-dependent hydrolases superfamily. Phosphotriesterase family. It depends on a divalent metal cation as a cofactor.

It is found in the cytoplasm. The protein localises to the cytosol. The catalysed reaction is N-acetyltaurine + H2O = taurine + acetate. The enzyme catalyses N-propanoyltaurine + H2O = propanoate + taurine. It carries out the reaction N-acetyl-L-methionine + H2O = L-methionine + acetate. It catalyses the reaction N-acetyl-L-isoleucine + H2O = L-isoleucine + acetate. The catalysed reaction is N-acetyl-L-leucine + H2O = L-leucine + acetate. The enzyme catalyses N-acetyl-L-valine + H2O = L-valine + acetate. In terms of biological role, N-acetyltaurine hydrolase that catalyzes the hydrolysis of N-acetyltaurine into taurine and acetate. PTER also acts on other N-acetyl amino acids (Met, Ile, Leu, Val) and N-propionyltaurine, but at lower rates. The protein is N-acetyltaurine hydrolase (pter) of Salmo salar (Atlantic salmon).